The following is a 400-amino-acid chain: Chalcone synthase 7 (400 aa).

Residue Cys168 is part of the active site.

Belongs to the thiolase-like superfamily. Chalcone/stilbene synthases family.

It carries out the reaction (E)-4-coumaroyl-CoA + 3 malonyl-CoA + 3 H(+) = 2',4,4',6'-tetrahydroxychalcone + 3 CO2 + 4 CoA. The protein operates within secondary metabolite biosynthesis; flavonoid biosynthesis. Its function is as follows. The primary product of this enzyme is 4,2',4',6'-tetrahydroxychalcone (also termed naringenin-chalcone or chalcone) which can under specific conditions spontaneously isomerize into naringenin. The protein is Chalcone synthase 7 (CHS7) of Sorghum bicolor (Sorghum).